A 513-amino-acid polypeptide reads, in one-letter code: Bifunctional purine biosynthesis protein PurH (513 aa).

An MGS-like domain is found at 1-147 (MIQIKRALVS…KNHKNVVVLT (147 aa)).

The protein belongs to the PurH family.

The catalysed reaction is (6R)-10-formyltetrahydrofolate + 5-amino-1-(5-phospho-beta-D-ribosyl)imidazole-4-carboxamide = 5-formamido-1-(5-phospho-D-ribosyl)imidazole-4-carboxamide + (6S)-5,6,7,8-tetrahydrofolate. It carries out the reaction IMP + H2O = 5-formamido-1-(5-phospho-D-ribosyl)imidazole-4-carboxamide. Its pathway is purine metabolism; IMP biosynthesis via de novo pathway; 5-formamido-1-(5-phospho-D-ribosyl)imidazole-4-carboxamide from 5-amino-1-(5-phospho-D-ribosyl)imidazole-4-carboxamide (10-formyl THF route): step 1/1. It functions in the pathway purine metabolism; IMP biosynthesis via de novo pathway; IMP from 5-formamido-1-(5-phospho-D-ribosyl)imidazole-4-carboxamide: step 1/1. The protein is Bifunctional purine biosynthesis protein PurH of Leptospira biflexa serovar Patoc (strain Patoc 1 / Ames).